The following is a 306-amino-acid chain: Ornithine carbamoyltransferase (306 aa).

Residues 53–56 (STRT), Q80, R104, and 131–134 (HPCQ) contribute to the carbamoyl phosphate site. L-ornithine contacts are provided by residues N162, D219, and 223-224 (SM). Carbamoyl phosphate-binding positions include 259-260 (CL) and R287.

The protein belongs to the aspartate/ornithine carbamoyltransferase superfamily. OTCase family.

The protein resides in the cytoplasm. The catalysed reaction is carbamoyl phosphate + L-ornithine = L-citrulline + phosphate + H(+). It participates in amino-acid biosynthesis; L-arginine biosynthesis; L-arginine from L-ornithine and carbamoyl phosphate: step 1/3. Reversibly catalyzes the transfer of the carbamoyl group from carbamoyl phosphate (CP) to the N(epsilon) atom of ornithine (ORN) to produce L-citrulline. This chain is Ornithine carbamoyltransferase, found in Psychrobacter sp. (strain PRwf-1).